The following is a 176-amino-acid chain: Ribosome maturation factor RimP (176 aa).

Residues 143 to 176 form a disordered region; sequence LKPQTAKKKGRQEETEDMTLELDAVSRAVPEAEI.

It belongs to the RimP family.

Its subcellular location is the cytoplasm. Functionally, required for maturation of 30S ribosomal subunits. This is Ribosome maturation factor RimP from Chlorobium luteolum (strain DSM 273 / BCRC 81028 / 2530) (Pelodictyon luteolum).